The sequence spans 154 residues: uncharacterized protein (154 aa).

The N-terminal stretch at 1–33 (MTKRGIQAFAGGIILATAVLAAVFYLTDEDQAA) is a signal peptide.

This is an uncharacterized protein from Bacillus subtilis (strain 168).